The following is a 363-amino-acid chain: L-arabinitol 4-dehydrogenase (363 aa).

Zn(2+)-binding residues include Cys53, His78, Glu79, Cys108, Cys111, Cys114, Cys122, and Glu163. NAD(+) is bound by residues 190-191 (PI), Asp211, Arg216, Ile282, and 306-308 (QYR).

The protein belongs to the zinc-containing alcohol dehydrogenase family. As to quaternary structure, homotetramer. Requires Zn(2+) as cofactor.

It catalyses the reaction L-arabinitol + NAD(+) = L-xylulose + NADH + H(+). Its pathway is carbohydrate degradation; L-arabinose degradation via L-arabinitol; D-xylulose 5-phosphate from L-arabinose (fungal route): step 2/5. Its function is as follows. Catalyzes the NAD-dependent oxidation of L-arabinitol to L-xylulose in the fungal L-arabinose catabolic pathway. L-arabinose catabolism is important for using plant material as a carbon source. Not active on D-arabinitol, D-sorbitol and D-mannitol. This Neurospora crassa (strain ATCC 24698 / 74-OR23-1A / CBS 708.71 / DSM 1257 / FGSC 987) protein is L-arabinitol 4-dehydrogenase (ard-1).